The chain runs to 434 residues: Gamma-enolase (434 aa).

Histidine 158 and glutamate 167 together coordinate substrate. The active-site Proton donor is glutamate 210. Mg(2+)-binding residues include aspartate 245, glutamate 293, and aspartate 318. Glutamate 293 and aspartate 318 together coordinate substrate. Lysine 343 (proton acceptor) is an active-site residue. Residues 370 to 373 and lysine 394 each bind substrate; that span reads SHRS.

It belongs to the enolase family. As to quaternary structure, homodimer. It depends on Mg(2+) as a cofactor. As to expression, expressed in the brain and, to much less but significant extents, in the pituitary and adrenal glands.

It is found in the cytoplasm. The enzyme catalyses (2R)-2-phosphoglycerate = phosphoenolpyruvate + H2O. It participates in carbohydrate degradation; glycolysis; pyruvate from D-glyceraldehyde 3-phosphate: step 4/5. The polypeptide is Gamma-enolase (ENO2) (Gallus gallus (Chicken)).